Here is a 208-residue protein sequence, read N- to C-terminus: Thymidylate kinase (208 aa).

10-17 (GPDGSGKT) contacts ATP.

The protein belongs to the thymidylate kinase family.

It carries out the reaction dTMP + ATP = dTDP + ADP. In terms of biological role, phosphorylation of dTMP to form dTDP in both de novo and salvage pathways of dTTP synthesis. This chain is Thymidylate kinase, found in Listeria monocytogenes serotype 4a (strain HCC23).